A 484-amino-acid polypeptide reads, in one-letter code: MAKLLALSVCFCFLVLGASSVTFRQQGEENECQFQRLNAQRPDNCIESEGGYIETWNPNNQEFQCAGVALSRFVLRRNALRRPFYSNAPQEIFIYQGSGYFGLIFPGCPGTFEEPIQGSEQFQRPSRHFQGQDQSQRPLDTHQKVHGFREGDLIAVPHGVAFWIYNDQDTDVVAISVLHTNSLHNQLDQFPRRFNLAGKQEQEFLRYQQRSGRQSPKGEEQEQEQENEGGNVFSGFSTEFLSHGFQVNEDIVRNLRGENEREEQGAIVTVKGGLSILVPPEWRQSYQQPGRGDKDFNNGIEETICTATVKMNIGKSTSADIYNPQAGSVRTVNELDLPILNRLGLSAEYGSIHRDAMFVPHYNMNANSMIYALHGGAHVQVVDCNGNRVFDEELQEGQSLVVPQNFAVAAKSQSEHFLYVAFKTNSRASISNLAGKNSYMWNLPEDVVANSYGLQYEQARQLKNNNPFTFLVPPQDSQMIRTVA.

The signal sequence occupies residues 1 to 20 (MAKLLALSVCFCFLVLGASS). 2 disulfides stabilise this stretch: Cys-32-Cys-65 and Cys-108-Cys-305. Positions 35–253 (QRLNAQRPDN…GFQVNEDIVR (219 aa)) constitute a Cupin type-1 1 domain. The tract at residues 208-233 (QQRSGRQSPKGEEQEQEQENEGGNVF) is disordered. A propeptide spanning residues 295 to 298 (DFNN) is cleaved from the precursor. In terms of domain architecture, Cupin type-1 2 spans 311–460 (MNIGKSTSAD…SYGLQYEQAR (150 aa)). Residues 479 to 484 (MIRTVA) constitute a propeptide that is removed on maturation.

The protein belongs to the 11S seed storage protein (globulins) family. As to quaternary structure, hexamer; each subunit is composed of an acidic and a basic chain derived from a single precursor and linked by a disulfide bond.

The polypeptide is Arachin Ahy-3 (Arachis hypogaea (Peanut)).